The following is a 582-amino-acid chain: Arginine--tRNA ligase (582 aa).

The short motif at 127 to 137 (PNLAKEMHVGH) is the 'HIGH' region element.

The protein belongs to the class-I aminoacyl-tRNA synthetase family. As to quaternary structure, monomer.

The protein localises to the cytoplasm. The catalysed reaction is tRNA(Arg) + L-arginine + ATP = L-arginyl-tRNA(Arg) + AMP + diphosphate. The sequence is that of Arginine--tRNA ligase from Psychromonas ingrahamii (strain DSM 17664 / CCUG 51855 / 37).